Here is a 394-residue protein sequence, read N- to C-terminus: NAC domain-containing protein 3 (394 aa).

Positions 3 to 147 (TPVGLRFCPT…TYTLCKVMFN (145 aa)) constitute an NAC domain. The DNA-binding element occupies 104–153 (IGEKKILMFYTSKESKSDWVIHEYHGFSHNQMMMTYTLCKVMFNGGMREK). Disordered regions lie at residues 152–173 (EKSSSSPSSSGVSGIEQSRRDS) and 264–300 (NSLTGVFSDDVSSDDNDSDLLTPKTNSIQTSSTCDSF). The segment covering 155–165 (SSSPSSSGVSG) has biased composition (low complexity). Residues 286–300 (PKTNSIQTSSTCDSF) show a composition bias toward polar residues.

It is found in the nucleus. This is NAC domain-containing protein 3 (NAC003) from Arabidopsis thaliana (Mouse-ear cress).